The following is a 166-amino-acid chain: Large ribosomal subunit protein uL10 (166 aa).

It belongs to the universal ribosomal protein uL10 family. Part of the ribosomal stalk of the 50S ribosomal subunit. The N-terminus interacts with L11 and the large rRNA to form the base of the stalk. The C-terminus forms an elongated spine to which L12 dimers bind in a sequential fashion forming a multimeric L10(L12)X complex.

Forms part of the ribosomal stalk, playing a central role in the interaction of the ribosome with GTP-bound translation factors. The sequence is that of Large ribosomal subunit protein uL10 from Bacillus licheniformis (strain ATCC 14580 / DSM 13 / JCM 2505 / CCUG 7422 / NBRC 12200 / NCIMB 9375 / NCTC 10341 / NRRL NRS-1264 / Gibson 46).